The sequence spans 118 residues: Small ribosomal subunit protein uS13 (118 aa).

Residues 94–118 (GLPVRGQRTKTNARTRKGPRKPIKK) are disordered.

Belongs to the universal ribosomal protein uS13 family. Part of the 30S ribosomal subunit. Forms a loose heterodimer with protein S19. Forms two bridges to the 50S subunit in the 70S ribosome.

Functionally, located at the top of the head of the 30S subunit, it contacts several helices of the 16S rRNA. In the 70S ribosome it contacts the 23S rRNA (bridge B1a) and protein L5 of the 50S subunit (bridge B1b), connecting the 2 subunits; these bridges are implicated in subunit movement. Contacts the tRNAs in the A and P-sites. The protein is Small ribosomal subunit protein uS13 of Erwinia tasmaniensis (strain DSM 17950 / CFBP 7177 / CIP 109463 / NCPPB 4357 / Et1/99).